The primary structure comprises 1883 residues: Chromodomain-helicase-DNA-binding protein 1 (1883 aa).

Residues 1–14 are compositionally biased toward polar residues; the sequence is MSQALNESANSIGS. A disordered region spans residues 1–293; that stretch reads MSQALNESAN…SEDEATDSED (293 aa). The span at 39-56 shows a compositional bias: low complexity; that stretch reads SGSDSDSDSSSGNSSDGR. Residues 114 to 128 show a composition bias toward polar residues; that stretch reads QRNQSINNANTSSSL. Over residues 159–172 the composition is skewed to low complexity; it reads DSSANVSPTSSSSS. Positions 213–226 are enriched in acidic residues; that stretch reads SDESDESEDSDDEV. A compositionally biased stretch (polar residues) spans 236 to 247; that stretch reads ATTSRSKLAQQQ. Residues 284–293 show a composition bias toward acidic residues; sequence SEDEATDSED. Chromo domains follow at residues 318-414 and 439-501; these read ETIE…YWRR and NNVD…TPSR. One can recognise a Helicase ATP-binding domain in the interval 540 to 710; it reads LHSWCKENSV…WALLHFIMPD (171 aa). An ATP-binding site is contributed by 553 to 560; sequence DEMGLGKT. The DEAH box motif lies at 661–664; that stretch reads DEAH. The Helicase C-terminal domain maps to 840–991; the sequence is LLDKLLCRLK…HLVIQRMDTT (152 aa). 5 disordered regions span residues 1074–1185, 1246–1265, 1390–1491, 1599–1829, and 1848–1883; these read FEEE…MKEK, HKEE…AKQR, TKGG…MHFT, KAGG…PYSS, and PPPS…RTQT. Residues 1091 to 1103 show a composition bias toward acidic residues; sequence GEEDDSKDWDDII. Positions 1106–1121 are enriched in basic and acidic residues; it reads GFRKAIDDQERAKEME. The segment covering 1393-1402 has biased composition (basic residues); it reads GQRRQRRPRA. The span at 1437–1451 shows a compositional bias: polar residues; sequence AESSNSQVDPSTASP. Positions 1466–1476 are enriched in basic residues; it reads KAKKSKARSKK. A CHD1 helical C-terminal domain (CHCT) region spans residues 1505 to 1606; sequence LDPSIFNECK…KQKAGGDGEA (102 aa). The segment covering 1600-1612 has biased composition (basic and acidic residues); it reads AGGDGEAKGKDKG. A compositionally biased stretch (low complexity) spans 1613-1622; that stretch reads SSGSPAKSKP. Positions 1627–1638 are enriched in basic and acidic residues; the sequence is TEEKEKERDRSG. Gly residues predominate over residues 1724-1738; that stretch reads YYGGSGPPMGSGSYE. A compositionally biased stretch (polar residues) spans 1742–1755; sequence NSRRQGPTSPSTPR. Basic and acidic residues-rich tracts occupy residues 1773-1794, 1805-1817, and 1868-1883; these read EMER…RYDG, YHRE…EKRR, and YPAD…RTQT.

It belongs to the SNF2/RAD54 helicase family. As to quaternary structure, monomer. Component of the SAGA complex. Interacts with SSRP1.

It is found in the nucleus. It localises to the chromosome. The enzyme catalyses ATP + H2O = ADP + phosphate + H(+). Its function is as follows. ATP-dependent chromatin-remodeling factor which functions as substrate recognition component of the transcription regulatory histone acetylation (HAT) complex SAGA. Regulates polymerase II transcription. Also required for efficient transcription by RNA polymerase I, and more specifically the polymerase I transcription termination step. Regulates negatively DNA replication. Not only involved in transcription-related chromatin remodeling, but also required to maintain a specific chromatin configuration across the genome. Involved in assembly of active chromatin. Required for maintaining open chromatin and pluripotency in embryonic stem cells and is important for wing development and fertility. Is essential for the incorporation of histone H3.3 and assembly of paternal chromatin. Required for replication-independent nucleosome assembly in the decondensing male pronucleus. The sequence is that of Chromodomain-helicase-DNA-binding protein 1 (Chd1) from Drosophila melanogaster (Fruit fly).